The primary structure comprises 307 residues: Ventral anterior homeobox 2 (307 aa).

3 disordered regions span residues 1–70 (MFDQ…DKLL), 155–175 (RTKQKKDQTKDTDKRSSSTSE), and 197–254 (PPPN…PSPR). Residues 25 to 38 (CRDRGRESKSRTEV) show a composition bias toward basic and acidic residues. Positions 46 to 62 (SSTDTPGTSASTPTSSS) are enriched in low complexity. Residues 103 to 162 (PKRTRTSFTAEQLYRLELEFQRCQYVVGRERTELARQLNLSETQVKVWFQNRRTKQKKDQ) constitute a DNA-binding region (homeobox). Residues 159–170 (KKDQTKDTDKRS) are compositionally biased toward basic and acidic residues. The segment covering 202–249 (LLAHPHPGNGSLLGSPSVSTSSGVSSSTTPPGAGSGTFGLSLSSLSGT) has biased composition (low complexity).

Belongs to the EMX homeobox family. As to expression, expressed in the anterior neural keel and later in the preoptic area, optic stalk and ventral retina.

Its subcellular location is the nucleus. Transcription factor that may function in dorsoventral specification of the forebrain. Required for closure of the choroid fissure and together with vax1 is required for optic nerve differentiation and to limit retinal development to the optic cup. This is Ventral anterior homeobox 2 (vax2) from Danio rerio (Zebrafish).